A 92-amino-acid chain; its full sequence is PqqA binding protein (92 aa).

The protein belongs to the PqqD family. As to quaternary structure, monomer. Interacts with PqqE.

It functions in the pathway cofactor biosynthesis; pyrroloquinoline quinone biosynthesis. Functionally, functions as a PqqA binding protein and presents PqqA to PqqE, in the pyrroloquinoline quinone (PQQ) biosynthetic pathway. The protein is PqqA binding protein of Xanthomonas campestris pv. campestris (strain B100).